Here is a 251-residue protein sequence, read N- to C-terminus: Cytochrome c oxidase subunit 2 (251 aa).

The N-terminal stretch at Met-1–Asn-15 is a signal peptide. Over Asp-16 to Asn-42 the chain is Mitochondrial intermembrane. The helical transmembrane segment at Ile-43–Thr-64 threads the bilayer. The Mitochondrial matrix portion of the chain corresponds to Tyr-65–Glu-82. Residues Ile-83–Cys-107 form a helical membrane-spanning segment. Residues Asp-108–Gln-251 lie on the Mitochondrial intermembrane side of the membrane. Positions 186, 221, 223, 225, 229, and 232 each coordinate Cu cation. Residue Glu-223 coordinates Mg(2+).

Belongs to the cytochrome c oxidase subunit 2 family. Component of the cytochrome c oxidase (complex IV, CIV), a multisubunit enzyme composed of a catalytic core of 3 subunits and several supernumerary subunits. The complex exists as a monomer or a dimer and forms supercomplexes (SCs) in the inner mitochondrial membrane with ubiquinol-cytochrome c oxidoreductase (cytochrome b-c1 complex, complex III, CIII). The cofactor is Cu cation. The signal sequence of COX2 is processed by IMP1.

It is found in the mitochondrion inner membrane. The catalysed reaction is 4 Fe(II)-[cytochrome c] + O2 + 8 H(+)(in) = 4 Fe(III)-[cytochrome c] + 2 H2O + 4 H(+)(out). Its function is as follows. Component of the cytochrome c oxidase, the last enzyme in the mitochondrial electron transport chain which drives oxidative phosphorylation. The respiratory chain contains 3 multisubunit complexes succinate dehydrogenase (complex II, CII), ubiquinol-cytochrome c oxidoreductase (cytochrome b-c1 complex, complex III, CIII) and cytochrome c oxidase (complex IV, CIV), that cooperate to transfer electrons derived from NADH and succinate to molecular oxygen, creating an electrochemical gradient over the inner membrane that drives transmembrane transport and the ATP synthase. Cytochrome c oxidase is the component of the respiratory chain that catalyzes the reduction of oxygen to water. Electrons originating from reduced cytochrome c in the intermembrane space (IMS) are transferred via the dinuclear copper A center (CU(A)) of subunit 2 and heme A of subunit 1 to the active site in subunit 1, a binuclear center (BNC) formed by heme A3 and copper B (CU(B)). The BNC reduces molecular oxygen to 2 water molecules using 4 electrons from cytochrome c in the IMS and 4 protons from the mitochondrial matrix. The protein is Cytochrome c oxidase subunit 2 (COX2) of Lachancea kluyveri (strain ATCC 58438 / CBS 3082 / BCRC 21498 / NBRC 1685 / JCM 7257 / NCYC 543 / NRRL Y-12651) (Yeast).